The primary structure comprises 459 residues: Cysteine--tRNA ligase (459 aa).

Cys28 contacts Zn(2+). Positions 30-40 match the 'HIGH' region motif; sequence VTIYDLCHIGH. Residues Cys209, His234, and Glu238 each coordinate Zn(2+). A 'KMSKS' region motif is present at residues 266-270; it reads KMSKS. Lys269 is an ATP binding site.

The protein belongs to the class-I aminoacyl-tRNA synthetase family. As to quaternary structure, monomer. The cofactor is Zn(2+).

The protein localises to the cytoplasm. It catalyses the reaction tRNA(Cys) + L-cysteine + ATP = L-cysteinyl-tRNA(Cys) + AMP + diphosphate. In Shewanella pealeana (strain ATCC 700345 / ANG-SQ1), this protein is Cysteine--tRNA ligase.